The sequence spans 383 residues: MTKRRVVVGMSGGVDSSVTAWLLKEQGYDVVGLFMKNWEDDDDGEYCSTRQDWIDVVSVADLIGIDVEAVNFAAEYKDRVFAEFLREYSAGRTPNPDVLCNAEIKFKAFLDHAMSLGAQTIATGHYARVRERDGRFELLKAFDHTKDQSYFLHRLNQAQLSKTMFPLGEIPKTRVREIAAQIGLPNAKKKDSTGICFIGERPFRDFLNRYLPTKPGPMKTPDGKTVGKHIGLAFYTFGQRKGIGLGGSKDGSGEPWFVAAKDIASNTLYVVQGHDHPWLRSRELVAGNVSWVAGEPPADGARCGAKTRYRQADAPCAFGRAAQAGDERFSLVFDEPQWAVTPGQSAVLYDGDVCLGGGIIESAATGRAGTAPAGRAPALVEAR.

Residues 9-16 (GMSGGVDS) and Met35 contribute to the ATP site. Residues 95–97 (NPD) are interaction with target base in tRNA. Cys100 functions as the Nucleophile in the catalytic mechanism. Cys100 and Cys196 are joined by a disulfide. An ATP-binding site is contributed by Gly124. The interaction with tRNA stretch occupies residues 146-148 (KDQ). Cys196 (cysteine persulfide intermediate) is an active-site residue. Positions 308–309 (RY) are interaction with tRNA.

This sequence belongs to the MnmA/TRMU family.

It localises to the cytoplasm. It catalyses the reaction S-sulfanyl-L-cysteinyl-[protein] + uridine(34) in tRNA + AH2 + ATP = 2-thiouridine(34) in tRNA + L-cysteinyl-[protein] + A + AMP + diphosphate + H(+). In terms of biological role, catalyzes the 2-thiolation of uridine at the wobble position (U34) of tRNA, leading to the formation of s(2)U34. In Burkholderia pseudomallei (strain 1106a), this protein is tRNA-specific 2-thiouridylase MnmA.